We begin with the raw amino-acid sequence, 477 residues long: Ankyrin repeat, SAM and basic leucine zipper domain-containing protein 1 (477 aa).

Phosphoserine occurs at positions 17, 18, and 20. ANK repeat units lie at residues 46-76, 80-109, 112-146, 150-179, 183-212, and 216-245; these read EKKEKFKKALTTGDVSLVQELLDSGIISVDA, YGWTPLMYAASVANAELVRVLLDRGANASF, DKQTILITACSAHGSEEQILKCVELLLSRNADPNV, RLMTPIMYAARDGHTQVVALLVAHGAEVNT, NGYTALTWAARQGRKSIVLKLLELGANKML, and DGKLPSEIAKRNKHHEIFSLLSFTLNPLEG. Residues 274–336 form the SAM domain; it reads SYAAFGDLEV…KILTALKELE (63 aa).

In terms of assembly, interacts with DDX4, PIWIL1, RANBP9 and TDRD1.

The protein localises to the cytoplasm. Functionally, plays a central role during spermatogenesis by repressing transposable elements and preventing their mobilization, which is essential for the germline integrity. Acts via the piRNA metabolic process, which mediates the repression of transposable elements during meiosis by forming complexes composed of piRNAs and Piwi proteins and governs the methylation and subsequent repression of transposons. Its association with pi-bodies suggests a participation in the primary piRNAs metabolic process. Required prior to the pachytene stage to facilitate the production of multiple types of piRNAs, including those associated with repeats involved in the regulation of retrotransposons. May act by mediating protein-protein interactions during germ cell maturation. This is Ankyrin repeat, SAM and basic leucine zipper domain-containing protein 1 (ASZ1) from Ateles geoffroyi (Black-handed spider monkey).